A 311-amino-acid polypeptide reads, in one-letter code: Protease HtpX homolog 1 (311 aa).

The next 2 membrane-spanning stretches (helical) occupy residues 12–32 (VISL…IASL) and 35–55 (ISLF…WIIS). His137 lines the Zn(2+) pocket. Residue Glu138 is part of the active site. His141 lines the Zn(2+) pocket. The next 2 helical transmembrane spans lie at 159–179 (VLGY…FLAA) and 184–204 (LLFA…TFIL). Position 216 (Glu216) interacts with Zn(2+).

It belongs to the peptidase M48B family. The cofactor is Zn(2+).

Its subcellular location is the cell membrane. The sequence is that of Protease HtpX homolog 1 from Saccharolobus solfataricus (strain ATCC 35092 / DSM 1617 / JCM 11322 / P2) (Sulfolobus solfataricus).